We begin with the raw amino-acid sequence, 723 residues long: Phenylalanine ammonia-lyase (723 aa).

The active-site Proton donor/acceptor is Tyr77. A cross-link (5-imidazolinone (Ala-Gly)) is located at residues 182–184 (ASG). Ser183 is modified (2,3-didehydroalanine (Ser)). Residues Asn241, Gln336, Arg342, Asn372, Lys443, Glu471, and Asn474 each contribute to the (E)-cinnamate site.

It belongs to the PAL/histidase family. Post-translationally, contains an active site 4-methylidene-imidazol-5-one (MIO), which is formed autocatalytically by cyclization and dehydration of residues Ala-Ser-Gly.

Its subcellular location is the cytoplasm. It carries out the reaction L-phenylalanine = (E)-cinnamate + NH4(+). It functions in the pathway secondary metabolite biosynthesis. It participates in phenylpropanoid metabolism; trans-cinnamate biosynthesis; trans-cinnamate from L-phenylalanine: step 1/1. In terms of biological role, phenylalanine ammonia-lyase; part of the gene cluster that mediates the biosynthesis of squalestatin S1 (SQS1, also known as zaragozic acid A), a heavily oxidized fungal polyketide that offers potent cholesterol lowering activity by targeting squalene synthase (SS). SQS1 is composed of a 2,8-dioxobicyclic[3.2.1]octane-3,4,5-tricarboxyclic acid core that is connected to two lipophilic polyketide arms. These initial steps feature the priming of an unusual benzoic acid starter unit onto the highly reducing polyketide synthase clz14, followed by oxaloacetate extension and product release to generate a tricarboxylic acid containing product. The phenylalanine ammonia lyase (PAL) clz10 and the acyl-CoA ligase clz12 are involved in transforming phenylalanine into benzoyl-CoA. The citrate synthase-like protein clz17 is involved in connecting the C-alpha-carbons of the hexaketide chain and oxaloacetate to afford the tricarboxylic acid unit. The potential hydrolytic enzymes, clz11 and clz13, are in close proximity to pks2 and may participate in product release. On the other side, the tetraketide arm is synthesized by a the squalestatin tetraketide synthase clz2 and enzymatically esterified to the core in the last biosynthetic step, by the acetyltransferase clz6. The biosynthesis of the tetraketide must involve 3 rounds of chain extension. After the first and second rounds methyl-transfer occurs, and in all rounds of extension the ketoreductase and dehydratase are active. The enoyl reductase and C-MeT of clz2 are not active in the final round of extension. The acetyltransferase clz6 appears to have a broad substrate selectivity for its acyl CoA substrate, allowing the in vitro synthesis of novel squalestatins. The biosynthesis of SQS1 requires several oxidative steps likely performed by oxidoreductases clz3, clz15 and clz16. Finally, in support of the identification of the cluster as being responsible for SQS1 production, the cluster contains a gene encoding a putative squalene synthase (SS) clz20, suggesting a likely mechanism for self-resistance. The protein is Phenylalanine ammonia-lyase of Cochliobolus lunatus (Filamentous fungus).